The chain runs to 319 residues: ATP-dependent 6-phosphofructokinase (319 aa).

Position 11 (G11) interacts with ATP. 21 to 25 (RAVVR) contributes to the ADP binding site. ATP-binding positions include 72 to 73 (RC) and 102 to 105 (GDGS). D103 contacts Mg(2+). 125–127 (TID) lines the substrate pocket. D127 functions as the Proton acceptor in the catalytic mechanism. R154 serves as a coordination point for ADP. Substrate-binding positions include R162 and 169-171 (MGR). Residues 185–187 (GAE), K211, and 213–215 (KMH) contribute to the ADP site. Substrate is bound by residues E222, R243, and 249–252 (HIQR).

It belongs to the phosphofructokinase type A (PFKA) family. ATP-dependent PFK group I subfamily. Prokaryotic clade 'B1' sub-subfamily. In terms of assembly, homotetramer. It depends on Mg(2+) as a cofactor.

It is found in the cytoplasm. It catalyses the reaction beta-D-fructose 6-phosphate + ATP = beta-D-fructose 1,6-bisphosphate + ADP + H(+). Its pathway is carbohydrate degradation; glycolysis; D-glyceraldehyde 3-phosphate and glycerone phosphate from D-glucose: step 3/4. Its activity is regulated as follows. Allosterically activated by ADP and other diphosphonucleosides, and allosterically inhibited by phosphoenolpyruvate. Functionally, catalyzes the phosphorylation of D-fructose 6-phosphate to fructose 1,6-bisphosphate by ATP, the first committing step of glycolysis. The protein is ATP-dependent 6-phosphofructokinase of Clostridium botulinum (strain 657 / Type Ba4).